The sequence spans 131 residues: Maturin (131 aa).

Tyr34 bears the Phosphotyrosine mark. Acidic residues predominate over residues Phe107–Glu120. The segment at Phe107 to Gln131 is disordered.

The protein belongs to the MTURN family. Post-translationally, phosphorylation at Tyr-34 is essential for its ability to promote megakaryocyte differentiation. As to expression, expressed in the thymus, bone marrow and spleen.

The protein resides in the cytoplasm. In terms of biological role, promotes megakaryocyte differentiation by enhancing ERK and JNK signaling as well as up-regulating RUNX1 and FLI1 expression. Represses NF-kappa-B transcriptional activity by inhibiting phosphorylation of RELA at 'Ser- 536'. May be involved in early neuronal development. This is Maturin (Mturn) from Mus musculus (Mouse).